Consider the following 463-residue polypeptide: Trigger factor (463 aa).

The 82-residue stretch at 162 to 243 (GDVVTLDLEA…VSQVAARELP (82 aa)) folds into the PPIase FKBP-type domain. The tract at residues 427-463 (TNGEIVDLDDEDETESTPETTEAAEAAEESTEDKPEA) is disordered. Positions 432–442 (VDLDDEDETES) are enriched in acidic residues.

The protein belongs to the FKBP-type PPIase family. Tig subfamily.

It is found in the cytoplasm. It carries out the reaction [protein]-peptidylproline (omega=180) = [protein]-peptidylproline (omega=0). Its function is as follows. Involved in protein export. Acts as a chaperone by maintaining the newly synthesized protein in an open conformation. Functions as a peptidyl-prolyl cis-trans isomerase. This chain is Trigger factor, found in Streptomyces avermitilis (strain ATCC 31267 / DSM 46492 / JCM 5070 / NBRC 14893 / NCIMB 12804 / NRRL 8165 / MA-4680).